We begin with the raw amino-acid sequence, 437 residues long: UBX domain-containing protein 6 (437 aa).

2 disordered regions span residues 1 to 45 and 89 to 109; these read MNSF…AQGG and ERRQVEDLNISGTSSLQQPDR. The segment covering 7–18 has biased composition (basic residues); it reads FLNKKRVQNHFK. Residues 179–251 form the PUB domain; the sequence is ETAIETICKY…VFTKPSDVHL (73 aa). The UBX domain maps to 332–409; sequence YRYKYTLIRV…SLAPAALLHV (78 aa).

In terms of assembly, interacts with cdc-48.1 (via N-terminus) and cdc-48.2 (via N-terminus). Expressed in the pharynx and some head neurons.

In terms of biological role, probably acts as an adapter for ATPase cdc-48.1 and/or cdc-48.2, conferring substrate specificity. Involved in the lysosomal clearance of cellular material in diet restricted conditions. The protein is UBX domain-containing protein 6 of Caenorhabditis elegans.